A 378-amino-acid chain; its full sequence is UPF0725 protein At1g23970 (378 aa).

Belongs to the UPF0725 (EMB2204) family.

The chain is UPF0725 protein At1g23970 from Arabidopsis thaliana (Mouse-ear cress).